We begin with the raw amino-acid sequence, 185 residues long: Elongation factor P (185 aa).

It belongs to the elongation factor P family.

It is found in the cytoplasm. It functions in the pathway protein biosynthesis; polypeptide chain elongation. Its function is as follows. Involved in peptide bond synthesis. Stimulates efficient translation and peptide-bond synthesis on native or reconstituted 70S ribosomes in vitro. Probably functions indirectly by altering the affinity of the ribosome for aminoacyl-tRNA, thus increasing their reactivity as acceptors for peptidyl transferase. This is Elongation factor P from Nostoc punctiforme (strain ATCC 29133 / PCC 73102).